Here is a 388-residue protein sequence, read N- to C-terminus: Succinate--CoA ligase [ADP-forming] subunit beta (388 aa).

In terms of domain architecture, ATP-grasp spans lysine 9 to alanine 244. Residues lysine 46, glycine 53–glycine 55, glutamate 99, alanine 102, and glutamate 107 contribute to the ATP site. The Mg(2+) site is built by asparagine 199 and aspartate 213. Residues asparagine 264 and glycine 321–valine 323 each bind substrate.

It belongs to the succinate/malate CoA ligase beta subunit family. Heterotetramer of two alpha and two beta subunits. It depends on Mg(2+) as a cofactor.

It carries out the reaction succinate + ATP + CoA = succinyl-CoA + ADP + phosphate. It catalyses the reaction GTP + succinate + CoA = succinyl-CoA + GDP + phosphate. It functions in the pathway carbohydrate metabolism; tricarboxylic acid cycle; succinate from succinyl-CoA (ligase route): step 1/1. Functionally, succinyl-CoA synthetase functions in the citric acid cycle (TCA), coupling the hydrolysis of succinyl-CoA to the synthesis of either ATP or GTP and thus represents the only step of substrate-level phosphorylation in the TCA. The beta subunit provides nucleotide specificity of the enzyme and binds the substrate succinate, while the binding sites for coenzyme A and phosphate are found in the alpha subunit. This is Succinate--CoA ligase [ADP-forming] subunit beta from Mannheimia succiniciproducens (strain KCTC 0769BP / MBEL55E).